The primary structure comprises 2527 residues: Leucine-rich repeat serine/threonine-protein kinase 2 (2527 aa).

The tract at residues 1–969 is required for RAB29-mediated activation; it reads MASGSCQGCE…RSSKLQSHMR (969 aa). A coiled-coil region spans residues 319-348; the sequence is LTETIFLNQDLEEKNENQENDDEGEEDKLF. Phosphoserine is present on residues Ser-910, Ser-935, Ser-955, and Ser-973. LRR repeat units follow at residues 983 to 1004, 1012 to 1033, 1036 to 1057, 1059 to 1080, 1084 to 1105, 1108 to 1129, 1130 to 1150, 1156 to 1171, 1174 to 1196, 1197 to 1218, 1221 to 1245, 1246 to 1267, and 1269 to 1291; these read YITS…SQKC, HLEK…LCET, SLTH…LLKM, CIAN…DPTV, TLKQ…LTDV, KLEQ…LRLK, ELKI…NFLE, ESFS…MPFL, SMTI…LNLP, HLRS…AHWK, NLRE…YLWS, RVEK…IGCL, and NLTS…MGKL. Phosphoserine; by autocatalysis is present on Ser-1292. Positions 1328 to 1511 constitute a Roc domain; it reads KAVPYNRMKL…KTIINESLNF (184 aa). 1341-1348 is a binding site for GTP; that stretch reads GNTGSGKT. Ser-1444 carries the phosphoserine modification. The region spanning 1546 to 1740 is the COR domain; the sequence is PVIDRKRLLQ…RMYWRQGIYL (195 aa). In terms of domain architecture, Protein kinase spans 1879 to 2138; sequence QAPEFLLGDG…FDILNSAELV (260 aa). Leu-1885, Asp-1887, Gly-1888, Gly-1891, Val-1893, Ala-1904, Lys-1906, Met-1947, Glu-1948, Ala-1950, Ser-1954, and Arg-1957 together coordinate ATP. Asp-1994 acts as the Proton acceptor in catalysis. ATP-binding residues include His-1998, Leu-2001, Ala-2016, and Asp-2017. A GTP-binding site is contributed by 2098 to 2121; that stretch reads EYGCAPWPMVEKLIKQCLKENPQE. WD repeat units follow at residues 2139–2183, 2188–2228, 2233–2276, 2281–2327, 2333–2377, 2402–2438, and 2443–2497; these read CLTR…SFLD, GYTS…LVIN, KKRH…AIFE, KLKG…FSFS, QKLI…EVWD, KESK…LLLD, and RLIR…TVWD. 2295-2298 is a GTP binding site; that stretch reads NVST.

It belongs to the protein kinase superfamily. TKL Ser/Thr protein kinase family. In terms of assembly, homodimer. Homotetramer; when activated by GTP-bound RAB29. Interacts with PRKN, PRDX3, and TPCN2. Interacts with VPS35. Interacts (via N-terminus) with RAB29; this interaction is direct and stimulates kinase activity. Interacts (via ROC domain) with SEC16A. Interacts with APP; interaction promotes phosphorylation of 'Thr-743' of APP. Interacts with MAPT. Interacts with RAB8A, RAB10, and RAB12. Interacts (via N-terminus) with RAB32. Interacts with YWHAG; this interaction is dependent on phosphorylation of Ser-910 and either Ser-935 or Ser-1444. Interacts with SFN; this interaction is dependent on phosphorylation of Ser-910 and/or Ser-935. It depends on Mg(2+) as a cofactor. In terms of processing, autophosphorylated at Ser-1292; autophosphorylation is stimulated by RAB29. Phosphorylation of Ser-910 and either Ser-935 or Ser-1444 facilitates interaction with YWHAG. Phosphorylation of Ser-910 and/or Ser-935 facilitates interaction with SFN. Ubiquitinated by TRIM1; undergoes 'Lys-48'-linked polyubiquitination leading to proteasomal degradation. As to expression, expressed in pyramidal neurons in all cortical laminae of the visual cortex, in neurons of the substantia nigra pars compacta and caudate putamen (at protein level). Expressed in neutrophils (at protein level). Expressed in the brain. Expressed throughout the adult brain, but at a lower level than in heart and liver. Also expressed in placenta, lung, skeletal muscle, kidney and pancreas. In the brain, expressed in the cerebellum, cerebral cortex, medulla, spinal cord occipital pole, frontal lobe, temporal lobe and putamen. Expression is particularly high in brain dopaminoceptive areas.

The protein resides in the cytoplasmic vesicle. It localises to the perikaryon. It is found in the golgi apparatus membrane. Its subcellular location is the cell projection. The protein localises to the axon. The protein resides in the dendrite. It localises to the endoplasmic reticulum membrane. It is found in the secretory vesicle. Its subcellular location is the synaptic vesicle membrane. The protein localises to the endosome. The protein resides in the lysosome. It localises to the mitochondrion outer membrane. It is found in the cytoplasm. Its subcellular location is the cytoskeleton. The protein localises to the phagosome. It catalyses the reaction L-threonyl-[protein] + ATP = O-phospho-L-threonyl-[protein] + ADP + H(+). It carries out the reaction L-seryl-[protein] + ATP = O-phospho-L-seryl-[protein] + ADP + H(+). The catalysed reaction is GTP + H2O = GDP + phosphate + H(+). Kinase activity is regulated by the GTPase activity of the ROC domain. GTP-bound LRRK2 kinase activity is stimulated by RAB29. Phosphorylation of RAB10 'Thr-73' is stimulated by RAB29 and RAB32. Inhibited by small molecule inhibitor MLi-2. Serine/threonine-protein kinase which phosphorylates a broad range of proteins involved in multiple processes such as neuronal plasticity, innate immunity, autophagy, and vesicle trafficking. Is a key regulator of RAB GTPases by regulating the GTP/GDP exchange and interaction partners of RABs through phosphorylation. Phosphorylates RAB3A, RAB3B, RAB3C, RAB3D, RAB5A, RAB5B, RAB5C, RAB8A, RAB8B, RAB10, RAB12, RAB29, RAB35, and RAB43. Regulates the RAB3IP-catalyzed GDP/GTP exchange for RAB8A through the phosphorylation of 'Thr-72' on RAB8A. Inhibits the interaction between RAB8A and GDI1 and/or GDI2 by phosphorylating 'Thr-72' on RAB8A. Regulates primary ciliogenesis through phosphorylation of RAB8A and RAB10, which promotes SHH signaling in the brain. Together with RAB29, plays a role in the retrograde trafficking pathway for recycling proteins, such as mannose-6-phosphate receptor (M6PR), between lysosomes and the Golgi apparatus in a retromer-dependent manner. Regulates neuronal process morphology in the intact central nervous system (CNS). Plays a role in synaptic vesicle trafficking. Plays an important role in recruiting SEC16A to endoplasmic reticulum exit sites (ERES) and in regulating ER to Golgi vesicle-mediated transport and ERES organization. Positively regulates autophagy through a calcium-dependent activation of the CaMKK/AMPK signaling pathway. The process involves activation of nicotinic acid adenine dinucleotide phosphate (NAADP) receptors, increase in lysosomal pH, and calcium release from lysosomes. Phosphorylates PRDX3. By phosphorylating APP on 'Thr-743', which promotes the production and the nuclear translocation of the APP intracellular domain (AICD), regulates dopaminergic neuron apoptosis. Acts as a positive regulator of innate immunity by mediating phosphorylation of RIPK2 downstream of NOD1 and NOD2, thereby enhancing RIPK2 activation. Independent of its kinase activity, inhibits the proteasomal degradation of MAPT, thus promoting MAPT oligomerization and secretion. In addition, has GTPase activity via its Roc domain which regulates LRRK2 kinase activity. Recruited by RAB29/RAB7L1 to overloaded lysosomes where it phosphorylates and stabilizes RAB8A and RAB10 which promote lysosomal content release and suppress lysosomal enlargement through the EHBP1 and EHBP1L1 effector proteins. The polypeptide is Leucine-rich repeat serine/threonine-protein kinase 2 (LRRK2) (Homo sapiens (Human)).